Consider the following 511-residue polypeptide: Ribonuclease Y (511 aa).

The chain crosses the membrane as a helical span at residues 3–23 (VGILIGIIILGVVGFIQYTLI). Residues 201–286 (TVHVVALPND…EMVERAIKDV (86 aa)) enclose the KH domain. The region spanning 327-420 (VLKHSIEVSY…VQAADAISAA (94 aa)) is the HD domain.

Belongs to the RNase Y family.

Its subcellular location is the cell membrane. Its function is as follows. Endoribonuclease that initiates mRNA decay. The sequence is that of Ribonuclease Y from Clostridium perfringens (strain ATCC 13124 / DSM 756 / JCM 1290 / NCIMB 6125 / NCTC 8237 / Type A).